The primary structure comprises 313 residues: Probable cell division protein WhiA (313 aa).

The segment at residues 277–311 is a DNA-binding region (H-T-H motif); that stretch reads SLKEVAAQVPDGPISKSGVNHRFQKIREIAKQLKE.

It belongs to the WhiA family.

Involved in cell division and chromosome segregation. The sequence is that of Probable cell division protein WhiA from Lactobacillus johnsonii (strain CNCM I-12250 / La1 / NCC 533).